The sequence spans 83 residues: Putative defensin-like protein 110 (83 aa).

Residues 1-24 (MAITKKNLIAFVFTILFVISYVHC) form the signal peptide. Intrachain disulfides connect C43-C81, C49-C73, C59-C79, and C63-C80.

This sequence belongs to the DEFL family.

The protein localises to the secreted. This Arabidopsis thaliana (Mouse-ear cress) protein is Putative defensin-like protein 110.